Reading from the N-terminus, the 217-residue chain is Vesicle-associated membrane protein 723 (217 aa).

Residues 1–192 (MAQQSLFYSF…KWFQNMKIKL (192 aa)) are Cytoplasmic-facing. Positions 10–114 (FIARGTVILV…SLNKEFGSNL (105 aa)) constitute a Longin domain. Residues 130-186 (NLAKAKAQVSEVKSLMMENIEKVLARGVICEMLGSSESQPQAFYIKRTQMKRKKWFQ) form the v-SNARE coiled-coil homology domain. A helical; Anchor for type IV membrane protein transmembrane segment spans residues 193 to 213 (IVLAIIIALILIIILSVCGGF). Topologically, residues 214-217 (NCGK) are vesicular.

Belongs to the synaptobrevin family. Highly expressed in stems and roots. Detected in flowers and leaves.

It localises to the endoplasmic reticulum membrane. Functionally, involved in the targeting and/or fusion of transport vesicles to their target membrane. In Arabidopsis thaliana (Mouse-ear cress), this protein is Vesicle-associated membrane protein 723.